The following is a 264-amino-acid chain: Ribosomal RNA small subunit methyltransferase A (264 aa).

Positions 12, 14, 40, 61, 86, and 105 each coordinate S-adenosyl-L-methionine.

This sequence belongs to the class I-like SAM-binding methyltransferase superfamily. rRNA adenine N(6)-methyltransferase family. RsmA subfamily.

Its subcellular location is the cytoplasm. It catalyses the reaction adenosine(1518)/adenosine(1519) in 16S rRNA + 4 S-adenosyl-L-methionine = N(6)-dimethyladenosine(1518)/N(6)-dimethyladenosine(1519) in 16S rRNA + 4 S-adenosyl-L-homocysteine + 4 H(+). Its function is as follows. Specifically dimethylates two adjacent adenosines (A1518 and A1519) in the loop of a conserved hairpin near the 3'-end of 16S rRNA in the 30S particle. May play a critical role in biogenesis of 30S subunits. The polypeptide is Ribosomal RNA small subunit methyltransferase A (Fusobacterium nucleatum subsp. nucleatum (strain ATCC 25586 / DSM 15643 / BCRC 10681 / CIP 101130 / JCM 8532 / KCTC 2640 / LMG 13131 / VPI 4355)).